The following is a 205-amino-acid chain: Holliday junction branch migration complex subunit RuvA (205 aa).

The tract at residues 1 to 64 (MIGKLKGTID…EDQLKLFGFL (64 aa)) is domain I. The interval 65 to 143 (SALEREWFRL…AFVGEMAPSI (79 aa)) is domain II. The tract at residues 144–153 (GLKQELGEGV) is flexible linker. The segment at 153-205 (VAAAPVSDAVSALTNLGYSRDQAANAVAAALKNGGEGADSARLIRLGLKELSR) is domain III.

Belongs to the RuvA family. Homotetramer. Forms an RuvA(8)-RuvB(12)-Holliday junction (HJ) complex. HJ DNA is sandwiched between 2 RuvA tetramers; dsDNA enters through RuvA and exits via RuvB. An RuvB hexamer assembles on each DNA strand where it exits the tetramer. Each RuvB hexamer is contacted by two RuvA subunits (via domain III) on 2 adjacent RuvB subunits; this complex drives branch migration. In the full resolvosome a probable DNA-RuvA(4)-RuvB(12)-RuvC(2) complex forms which resolves the HJ.

It localises to the cytoplasm. Functionally, the RuvA-RuvB-RuvC complex processes Holliday junction (HJ) DNA during genetic recombination and DNA repair, while the RuvA-RuvB complex plays an important role in the rescue of blocked DNA replication forks via replication fork reversal (RFR). RuvA specifically binds to HJ cruciform DNA, conferring on it an open structure. The RuvB hexamer acts as an ATP-dependent pump, pulling dsDNA into and through the RuvAB complex. HJ branch migration allows RuvC to scan DNA until it finds its consensus sequence, where it cleaves and resolves the cruciform DNA. In Sinorhizobium medicae (strain WSM419) (Ensifer medicae), this protein is Holliday junction branch migration complex subunit RuvA.